Here is a 1036-residue protein sequence, read N- to C-terminus: ADAMTS-like protein 4 (1036 aa).

Positions 1–24 are cleaved as a signal peptide; the sequence is MESWLGRLWLCMMLLLPLPQPCQD. Residues 47 to 91 form the TSP type-1 1 domain; sequence GPWGRWASCSQPCGVGVQRRSRTCELHPALPLPPRPPRHPEAHRP. 2 disordered regions span residues 73–149 and 163–308; these read HPAL…IKPG and HRSR…WLPL. Basic residues predominate over residues 163-173; the sequence is HRSRRHPHRPG. The segment covering 215 to 253 has biased composition (polar residues); that stretch reads TPRSGTAQTEVLPRTSSAPSYTGTPAPTSSFGDSRSFQG. 2 N-linked (GlcNAc...) asparagine glycosylation sites follow: N454 and N737. TSP type-1 domains are found at residues 687–748, 750–804, 805–871, 872–931, and 932–988; these read CPPY…HLCG, WEIS…DMGP, CTTA…GPCE, RTWR…QGQA, and CEDK…QPCN. Positions 991-1028 constitute a PLAC domain; that stretch reads PDDQCKDSSPHCPLVVQARLCVYPYYTTTCCRSCAHVL.

Interacts with CTSB. Interacts with FBN1. Glycosylated. Can be O-fucosylated by POFUT2 on a serine or a threonine residue found within the consensus sequence C1-X(2)-(S/T)-C2-G of the TSP type-1 repeat domains where C1 and C2 are the first and second cysteine residue of the repeat, respectively. Fucosylated repeats can then be further glycosylated by the addition of a beta-1,3-glucose residue by the glucosyltransferase, B3GALTL. Fucosylation mediates the efficient secretion of ADAMTS family members. Can also be C-glycosylated with one or two mannose molecules on tryptophan residues within the consensus sequence W-X-X-W of the TPRs, and N-glycosylated. These other glycosylations can also facilitate secretion. In terms of tissue distribution, widely expressed in a range of tissues. Especially prevalent in brain, spinal cord, muscle, lung and heart.

The protein resides in the secreted. Its subcellular location is the extracellular space. It is found in the extracellular matrix. In terms of biological role, positive regulation of apoptosis. May facilitate FBN1 microfibril biogenesis. The sequence is that of ADAMTS-like protein 4 from Mus musculus (Mouse).